Here is a 352-residue protein sequence, read N- to C-terminus: Anthranilate phosphoribosyltransferase (352 aa).

5-phospho-alpha-D-ribose 1-diphosphate is bound by residues glycine 83, 86 to 87 (GD), threonine 91, 93 to 96 (NIST), 111 to 119 (KHGGRSVSS), and alanine 123. Glycine 83 is an anthranilate binding site. A Mg(2+)-binding site is contributed by serine 95. Arginine 169 provides a ligand contact to anthranilate. Mg(2+) contacts are provided by aspartate 228 and glutamate 229.

It belongs to the anthranilate phosphoribosyltransferase family. Homodimer. It depends on Mg(2+) as a cofactor.

It carries out the reaction N-(5-phospho-beta-D-ribosyl)anthranilate + diphosphate = 5-phospho-alpha-D-ribose 1-diphosphate + anthranilate. It participates in amino-acid biosynthesis; L-tryptophan biosynthesis; L-tryptophan from chorismate: step 2/5. Catalyzes the transfer of the phosphoribosyl group of 5-phosphorylribose-1-pyrophosphate (PRPP) to anthranilate to yield N-(5'-phosphoribosyl)-anthranilate (PRA). The sequence is that of Anthranilate phosphoribosyltransferase from Neisseria meningitidis serogroup C (strain 053442).